The following is a 464-amino-acid chain: Cell division protein FtsA (464 aa).

The segment at 392 to 464 (EVIESDKDSE…FKKLMKSLFE (73 aa)) is disordered. The span at 416–455 (KKENDEVAPEAPREESYEDRENHLEDEQQTEGKAKEESKF) shows a compositional bias: basic and acidic residues.

This sequence belongs to the FtsA/MreB family. In terms of assembly, self-interacts. Interacts with FtsZ.

The protein localises to the cell membrane. Cell division protein that is involved in the assembly of the Z ring. May serve as a membrane anchor for the Z ring. This is Cell division protein FtsA from Staphylococcus epidermidis (strain ATCC 35984 / DSM 28319 / BCRC 17069 / CCUG 31568 / BM 3577 / RP62A).